An 893-amino-acid chain; its full sequence is DNA mismatch repair protein MutS (893 aa).

631-638 (GPNMAGKS) is a binding site for ATP. Positions 821–858 (AGRPRVAVRQPQGGRRGASTGQLGLFGMEPAQGGTGVT) are disordered.

Belongs to the DNA mismatch repair MutS family.

This protein is involved in the repair of mismatches in DNA. It is possible that it carries out the mismatch recognition step. This protein has a weak ATPase activity. The protein is DNA mismatch repair protein MutS of Myxococcus xanthus (strain DK1622).